A 1058-amino-acid polypeptide reads, in one-letter code: MDPRTRLDYALFQLTPTRTRCDLVIFSGGENEKLASGIFQPFVTHLKSVSDQISKGGYSVTLRPSSVGVPWFTKVTLQRFVRFVTTPEVLERSVTLEKEIEQIEDSIQANAAAIAGEAEGNELGGTWTSQKSTALSKTKGETDGDTVEENSKVGLQRVLENRKAALCKEQAMAYARALVVGFELDYMDDLFSFADAFGASRLREACVNFVDLCKRKNEDRMWVDQITAMQAFPRPELTFMGDSGIVLAGEENDLLNATNVKHGNSMDASSQGSFETGQEGRAQMAMPWPNQFPQYMQNFQGHGYPPPYMFPGMQGQSPYFHGNMQWPVNMGDVESNEKSSKKKKKKKKNKKKSKQDESAEPSDNSSTETESEDGNEGKKQSRKVVIRNINYITSKRNGAKESDSDESGEEEGFVDGDSIKQQVEEAIGSVERRHKSTSHRQRKHKSHNGDDDSSNKETKGNDNWDAFQNLLLKDNDSEPEELLRISSTALNMASEVVRKREPPSDDSFLVAIGNEDWGRETSIEKFNAGENVRIIRKGNNYDEEMLNPGRSDESRSYSQAEMSVHDGKLRTRNEAEEDWFIRNQAGPETDPSLVKTFVGDHFHLNKSSERDVLTDDSFMIHSRVENQVEDSRLRTEIMDLDVYGTTQQENSAPENTPHEPDDLYMVLGREQDVKPTLLPWTPEIDFETNTLAQRTSRIDLITATKASAGEQTLDGKEKKSRGISKGKDAKSRASSRPDPASKAKRPAWGSRAAVSKSKSEMEEERKKRMEELLIQRQKRIAEKSSGGSVSSSLASKKTPTVTKSVKSSIKNEKTPEAAQSKAKPVLRSSTIERLAVARTAPKEPQQKPVIKRTSKPSGYKTEKAQEKKSSKIGQSDAKSVELSRDPSLEIKETVVEDSHSYLSEKQVDALPAVASVDDFKDIKELHSLPSEETARVKNRPNEIIAEKVQDQTKIDDQETVKNTSVSEDKQITTKHYSEDVGEVQASQEKPVSPKKSVTFSETNMEEKYYFSPAVSEIDISTPPATEADHSRKKWNSEETSPKATAKVFRKLLMFGRKK.

Disordered stretches follow at residues 123–147 (LGGT…GDTV), 262–281 (HGNS…QEGR), and 330–463 (MGDV…GNDN). 2 stretches are compositionally biased toward polar residues: residues 126 to 136 (TWTSQKSTALS) and 262 to 276 (HGNS…SFET). The Nuclear localization signal 1 motif lies at 340–347 (SKKKKKKK). The segment covering 340–353 (SKKKKKKKKNKKKS) has biased composition (basic residues). Residues 403-414 (DSDESGEEEGFV) are compositionally biased toward acidic residues. The Nuclear localization signal 2 signature appears at 431–438 (ERRHKSTS). The span at 432 to 446 (RRHKSTSHRQRKHKS) shows a compositional bias: basic residues. Residues 447–462 (HNGDDDSSNKETKGND) show a composition bias toward basic and acidic residues. At Ser477 the chain carries Phosphoserine. Residues 708–887 (AGEQTLDGKE…KSVELSRDPS (180 aa)) are disordered. Over residues 757–773 (SKSEMEEERKKRMEELL) the composition is skewed to basic and acidic residues. The short motif at 764 to 771 (ERKKRMEE) is the Nuclear localization signal 3 element. The segment covering 783–808 (KSSGGSVSSSLASKKTPTVTKSVKSS) has biased composition (low complexity). Composition is skewed to basic and acidic residues over residues 860 to 869 (KTEKAQEKKS) and 878 to 887 (KSVELSRDPS). A phosphoserine mark is found at Ser915, Ser986, and Ser992. Positions 1020–1041 (STPPATEADHSRKKWNSEETSP) are disordered. Residues 1026–1040 (EADHSRKKWNSEETS) are compositionally biased toward basic and acidic residues.

As to quaternary structure, interacts with COP1.

The protein localises to the nucleus. In terms of biological role, exhibits transcriptional activation activity. Positive regulator of light-regulated genes, probably being a direct downstream target of COP1 for mediating light control of gene expression. The polypeptide is COP1-interacting protein 7 (Arabidopsis thaliana (Mouse-ear cress)).